Reading from the N-terminus, the 1080-residue chain is MVAPVPPGAPRPNSQQNSGPPNFYPGSQGNSNALADNMQNLSLNRPPPMMPGSGPRPPPPFGQSPQPFPQQSPSYGAPQRGPSPMSRPGPPAGMARPGGPPPVSQPAGFQSNVPLNRPTGPPSRQPSFGSRPSMPGGPVAQPAASSSGFPAFGPSGSVAAGPPPGSRPMAFGSPPPVGSGMSMPPSGMIGGPVSNGHQMVGSGGFPRGTQFPGAAVTTPQAPYVRPPSAPYARTPPQPLGSHSLSGNPPLTPFTAPSMPPPATFPGAPHGRPAVSGLPYGPPSAQVAPPLGFPGQMQPPRYGMGPLPNQSMTNIPTAMGQPGATVPGPSRIDPNQIPRPGSSSSPTVFETRQSNQANPPPPATSDYVVRDTGNCSPRYMRCTINQIPCTVDLLSTSGMQLALMVQPLALSHPSEEPIQVVDFGEGGPVRCSRCKGYINPFMKFIDQGRKFICNFCGYTDETPRDYHCNLGPDGRRRDVDERPELCRGTVEFVATKEYMVRDPMPAVYFFLIDVSMNAIQTGATAAACNAIQQVLSDLPEGPRTFVGIATFDSTIHFYNLKRALQQPLMLIVPDVQDVYTPLETDVVVQLSECRQHLELLLDSIPTMFQESKIPESAFGAAVKAAFLAMKSKGGKLMVFQSILCSVGVGALSSREAEGRANMSAGEKEAHKLLQPADKTLKTMAIEFAEYQVCVDIFITTQAYVDMASISVIPRTTGGQVYCYYPFSALSDPPKLYNDLKWNITRPQGFEAVMRVRCSQGIQVQEYSGNFCKRIPTDIDLPAHDDKLQDGAECAFQCALLYTTIYGERRIRVTTLSLSCTNMLSNLFRAADLDSQFACMLKQAANEIPSKALPLVKEQATNSCINALYAYRKFCATVTSSGQLILPEALKLFPLYTLALTKSVGLRTDGRIDDRSFWINYVSSLSTPLAIPLVYPRMISVHDLDVKDTEGSVLPPPIPLSSEHISNEGVYFLENGEDGLLFVGESVDSDILQKLFAVSSAAEIPNQFVLQQYDNQLSKKFNDAVNEIRRQRCSYLRIKLCKKGEPSGMLFLSYMVEDRTASGPSYVEFLVQVHRQIQLKMN.

The segment covering 1–10 has biased composition (pro residues); the sequence is MVAPVPPGAP. Disordered stretches follow at residues 1–189, 201–220, and 316–367; these read MVAP…SGMI, GSGG…TTPQ, and TAMG…SDYV. The span at 12 to 43 shows a compositional bias: polar residues; that stretch reads PNSQQNSGPPNFYPGSQGNSNALADNMQNLSL. Positions 45 to 70 are enriched in pro residues; the sequence is RPPPMMPGSGPRPPPPFGQSPQPFPQ. 3 stretches are compositionally biased toward low complexity: residues 71–84, 142–160, and 178–189; these read QSPS…GPSP, PAAS…SVAA, and GSGMSMPPSGMI. Polar residues predominate over residues 340–356; the sequence is GSSSSPTVFETRQSNQA. The Zn(2+) site is built by Cys430, Cys433, Cys452, and Cys455. Residues 430–455 form a zinc finger-like region; it reads CSRCKGYINPFMKFIDQGRKFICNFC.

The protein belongs to the SEC23/SEC24 family. SEC24 subfamily. In terms of assembly, component of the coat protein complex II (COPII), composed of at least five proteins: the Sec23/24 complex, the Sec13/31 complex and Sar1. In terms of tissue distribution, mainly expressed at low levels in pollen, leaves, roots and stems.

Its subcellular location is the cytoplasmic vesicle. The protein resides in the COPII-coated vesicle membrane. It localises to the endoplasmic reticulum membrane. It is found in the golgi apparatus membrane. Functionally, component of the coat protein complex II (COPII), that covers ER-derived vesicles involved in transport from the endoplasmic reticulum to the Golgi apparatus. COPII is composed of at least five proteins: the SEC23/24 complex, the SEC13/31 complex, and the protein SAR1. Acts in the cytoplasm to promote the transport of secretory, plasma membrane, and vacuolar proteins from the endoplasmic reticulum to the Golgi complex. The protein is Protein transport protein SEC24 C of Arabidopsis thaliana (Mouse-ear cress).